Consider the following 105-residue polypeptide: uncharacterized protein (105 aa).

This is an uncharacterized protein from Mycobacterium bovis (strain ATCC BAA-935 / AF2122/97).